A 297-amino-acid polypeptide reads, in one-letter code: Bifunctional protein FolD (297 aa).

Residues 169–171, Ser-196, and Ile-237 contribute to the NADP(+) site; that span reads GRS.

This sequence belongs to the tetrahydrofolate dehydrogenase/cyclohydrolase family. Homodimer.

The enzyme catalyses (6R)-5,10-methylene-5,6,7,8-tetrahydrofolate + NADP(+) = (6R)-5,10-methenyltetrahydrofolate + NADPH. It catalyses the reaction (6R)-5,10-methenyltetrahydrofolate + H2O = (6R)-10-formyltetrahydrofolate + H(+). Its pathway is one-carbon metabolism; tetrahydrofolate interconversion. Catalyzes the oxidation of 5,10-methylenetetrahydrofolate to 5,10-methenyltetrahydrofolate and then the hydrolysis of 5,10-methenyltetrahydrofolate to 10-formyltetrahydrofolate. The protein is Bifunctional protein FolD of Salinibacter ruber (strain DSM 13855 / M31).